Here is a 241-residue protein sequence, read N- to C-terminus: L-aspartate dehydrogenase (241 aa).

NAD(+)-binding residues include Ala109 and Asn164. His193 is a catalytic residue.

This sequence belongs to the L-aspartate dehydrogenase family.

It catalyses the reaction L-aspartate + NADP(+) + H2O = oxaloacetate + NH4(+) + NADPH + H(+). The enzyme catalyses L-aspartate + NAD(+) + H2O = oxaloacetate + NH4(+) + NADH + H(+). Its pathway is cofactor biosynthesis; NAD(+) biosynthesis; iminoaspartate from L-aspartate (dehydrogenase route): step 1/1. Functionally, specifically catalyzes the NAD or NADP-dependent dehydrogenation of L-aspartate to iminoaspartate. The chain is L-aspartate dehydrogenase from Thermotoga sp. (strain RQ2).